A 143-amino-acid polypeptide reads, in one-letter code: Mini-ribonuclease 3 (143 aa).

Residue D35 is part of the active site.

Belongs to the MrnC RNase family. Homodimer. Mg(2+) serves as cofactor.

The protein localises to the cytoplasm. Its function is as follows. Involved in correct processing of both the 5' and 3' ends of 23S rRNA precursor. Processes 30S rRNA precursor transcript even in absence of ribonuclease 3 (Rnc); Rnc processes 30S rRNA into smaller rRNA precursors. The chain is Mini-ribonuclease 3 from Synechocystis sp. (strain ATCC 27184 / PCC 6803 / Kazusa).